Consider the following 501-residue polypeptide: Aromatase 3 (501 aa).

Heme is bound at residue Cys435.

Belongs to the cytochrome P450 family. The cofactor is heme. In terms of tissue distribution, ovary.

The protein localises to the membrane. The enzyme catalyses testosterone + 3 reduced [NADPH--hemoprotein reductase] + 3 O2 = 17beta-estradiol + formate + 3 oxidized [NADPH--hemoprotein reductase] + 4 H2O + 4 H(+). It carries out the reaction androst-4-ene-3,17-dione + 3 reduced [NADPH--hemoprotein reductase] + 3 O2 = estrone + formate + 3 oxidized [NADPH--hemoprotein reductase] + 4 H2O + 4 H(+). Catalyzes the formation of aromatic C18 estrogens from C19 androgens. This Sus scrofa (Pig) protein is Aromatase 3 (CYP19A3).